A 127-amino-acid polypeptide reads, in one-letter code: Large ribosomal subunit protein uL18 (127 aa).

Belongs to the universal ribosomal protein uL18 family. As to quaternary structure, part of the 50S ribosomal subunit; part of the 5S rRNA/L5/L18/L25 subcomplex. Contacts the 5S and 23S rRNAs.

This is one of the proteins that bind and probably mediate the attachment of the 5S RNA into the large ribosomal subunit, where it forms part of the central protuberance. This Streptomyces griseus subsp. griseus (strain JCM 4626 / CBS 651.72 / NBRC 13350 / KCC S-0626 / ISP 5235) protein is Large ribosomal subunit protein uL18.